The following is an 871-amino-acid chain: Pre-mRNA-processing factor 40 homolog B (871 aa).

2 consecutive WW domains span residues 92–125 (GPPR…KPSV) and 133–166 (LLSQ…RPKD). An N6-acetyllysine modification is found at lysine 148. The tract at residues 171–277 (EVLVKQEAAG…RSGLSWSNRE (107 aa)) is disordered. Lysine 175 participates in a covalent cross-link: Glycyl lysine isopeptide (Lys-Gly) (interchain with G-Cter in SUMO2). A compositionally biased stretch (low complexity) spans 182-191 (QQQQLPQTLQ). The span at 192-211 (PQPPQPQPDPPPVPPGPTPV) shows a compositional bias: pro residues. 2 stretches are compositionally biased toward low complexity: residues 212–221 (PTGLLEPEPG) and 245–255 (EGPSSSGQHQP). FF domains are found at residues 276–330 (REKA…YKAQ), 340–397 (RLRA…VLFF), 410–470 (RRRN…HIRA), 490–550 (QRKN…YVEE), 554–610 (RFHD…LLEK), and 625–682 (RMRR…FLQV). The segment at 690-871 (HLHTKGRKHG…TLLQQLDDHQ (182 aa)) is disordered. Over residues 691–711 (LHTKGRKHGRKGKKHHHKRSH) the composition is skewed to basic residues. The segment covering 739–756 (SESGSEPSSSLDSVESGG) has biased composition (low complexity). Serine 764 is subject to Phosphoserine. The span at 777–793 (RKAKKPKKKTKKRRHKS) shows a compositional bias: basic residues. Residues 803 to 824 (EEKAGKESDEKEQEQDKDRELQ) show a composition bias toward basic and acidic residues. Serine 832 is modified (phosphoserine). Residue lysine 838 forms a Glycyl lysine isopeptide (Lys-Gly) (interchain with G-Cter in SUMO2) linkage. The residue at position 852 (serine 852) is a Phosphoserine.

It belongs to the PRPF40 family. As to quaternary structure, interacts with the N-terminus of HD. As to expression, expressed in the striatum and cortex of the brain (at protein level). Highly expressed in testis, fetal kidney and fetal brain. Moderately expressed in pancreas, skeletal muscle, placenta, brain and heart. Weakly expressed in colon, ileum, ovary, prostate, spleen, kidney and fetal lung.

It localises to the nucleus speckle. In terms of biological role, may be involved in pre-mRNA splicing. The polypeptide is Pre-mRNA-processing factor 40 homolog B (PRPF40B) (Homo sapiens (Human)).